The sequence spans 111 residues: Ig heavy chain V-III region HPC76 (111 aa).

Positions 1–110 (ESGGGLVQPG…WGQGTTLTVS (110 aa)) constitute an Ig-like domain.

In Mus musculus (Mouse), this protein is Ig heavy chain V-III region HPC76.